A 143-amino-acid polypeptide reads, in one-letter code: Large-conductance mechanosensitive channel (143 aa).

Helical transmembrane passes span 21 to 41, 44 to 64, and 86 to 106; these read VGVI…ADII, VVGL…LGTV, and GNFI…FMMV.

It belongs to the MscL family. Homopentamer.

The protein resides in the cell inner membrane. Its function is as follows. Channel that opens in response to stretch forces in the membrane lipid bilayer. May participate in the regulation of osmotic pressure changes within the cell. This is Large-conductance mechanosensitive channel from Variovorax paradoxus (strain S110).